Reading from the N-terminus, the 316-residue chain is tRNA dimethylallyltransferase (316 aa).

14–21 (GPTAVGKT) contributes to the ATP binding site. 16–21 (TAVGKT) contributes to the substrate binding site. The tract at residues 39–42 (DSMQ) is interaction with substrate tRNA.

It belongs to the IPP transferase family. In terms of assembly, monomer. It depends on Mg(2+) as a cofactor.

It carries out the reaction adenosine(37) in tRNA + dimethylallyl diphosphate = N(6)-dimethylallyladenosine(37) in tRNA + diphosphate. Its function is as follows. Catalyzes the transfer of a dimethylallyl group onto the adenine at position 37 in tRNAs that read codons beginning with uridine, leading to the formation of N6-(dimethylallyl)adenosine (i(6)A). The chain is tRNA dimethylallyltransferase from Bacillus cytotoxicus (strain DSM 22905 / CIP 110041 / 391-98 / NVH 391-98).